The chain runs to 272 residues: Ethanolamine ammonia-lyase small subunit (272 aa).

3 residues coordinate adenosylcob(III)alamin: valine 161, glutamate 182, and cysteine 211.

The protein belongs to the EutC family. As to quaternary structure, the basic unit is a heterodimer which dimerizes to form tetramers. The heterotetramers trimerize; 6 large subunits form a core ring with 6 small subunits projecting outwards. Adenosylcob(III)alamin is required as a cofactor.

The protein localises to the bacterial microcompartment. It catalyses the reaction ethanolamine = acetaldehyde + NH4(+). It participates in amine and polyamine degradation; ethanolamine degradation. Its function is as follows. Catalyzes the deamination of various vicinal amino-alcohols to oxo compounds. Allows this organism to utilize ethanolamine as the sole source of nitrogen and carbon in the presence of external vitamin B12. The sequence is that of Ethanolamine ammonia-lyase small subunit from Xanthomonas campestris pv. campestris (strain B100).